We begin with the raw amino-acid sequence, 558 residues long: MAPLRSSAITQGVQRSPNRAMLRAVGFGDGDFSKPIIGIANGYSTITPCNVGLNDLALRAEAATQAAGGMPQLFGTITVSDGISMGTEGMKYSLVSREVIADAIETACNGQSMDGVLAIGGCDKNMPAAMLAMARMNIPGVFVYGGTIKPGKLGGCDLTVVSAFEAVGQLSSGKIDEAQLTAVEKNACPGAGSCGGMFTANTMSAAIETMGLSLPFSSTMAAEDPEKAESAARSAEVLVEAIAANIRPLDLLTREAFENAISVIMAVGGSTNAVLHLLAIARTAGVPLSIDDFETIRQRVPVICDLKPSGRFVTVDLHNAGGIPQVMKLLLDGGLLHGDCRTVEGKTLREVLADVPSEPPADQEVIRPLSNPLYAKGHLAVLKGNLASEGAVAKISGVKTPVLTGPARVFESEEQCLQAILANQVHAGDVVVVRNEGPVGGPGMREMLAPTAAIVGEGLGDKVALITDGRFSGGTYGLVVGHVAPEAAVGGMIGLVQEGDSITVDAQQQLLQLNVDAAELERRKQAWVKPEPRYRTGVLGKYARLVSSSSKGAVTDQP.

Cys49 serves as a coordination point for [2Fe-2S] cluster. Residue Asp81 participates in Mg(2+) binding. [2Fe-2S] cluster is bound at residue Cys122. Residues Asp123 and Lys124 each contribute to the Mg(2+) site. At Lys124 the chain carries N6-carboxylysine. [2Fe-2S] cluster is bound at residue Cys194. Residue Glu446 coordinates Mg(2+). Ser472 acts as the Proton acceptor in catalysis.

Belongs to the IlvD/Edd family. As to quaternary structure, homodimer. [2Fe-2S] cluster is required as a cofactor. Mg(2+) serves as cofactor.

The enzyme catalyses (2R)-2,3-dihydroxy-3-methylbutanoate = 3-methyl-2-oxobutanoate + H2O. It carries out the reaction (2R,3R)-2,3-dihydroxy-3-methylpentanoate = (S)-3-methyl-2-oxopentanoate + H2O. It functions in the pathway amino-acid biosynthesis; L-isoleucine biosynthesis; L-isoleucine from 2-oxobutanoate: step 3/4. Its pathway is amino-acid biosynthesis; L-valine biosynthesis; L-valine from pyruvate: step 3/4. Functions in the biosynthesis of branched-chain amino acids. Catalyzes the dehydration of (2R,3R)-2,3-dihydroxy-3-methylpentanoate (2,3-dihydroxy-3-methylvalerate) into 2-oxo-3-methylpentanoate (2-oxo-3-methylvalerate) and of (2R)-2,3-dihydroxy-3-methylbutanoate (2,3-dihydroxyisovalerate) into 2-oxo-3-methylbutanoate (2-oxoisovalerate), the penultimate precursor to L-isoleucine and L-valine, respectively. In Synechococcus sp. (strain RCC307), this protein is Dihydroxy-acid dehydratase.